The primary structure comprises 298 residues: ADP/ATP translocase 3 (298 aa).

At M1 the chain carries N-acetylmethionine. Residues 1 to 7 (MTEQAIS) lie on the Mitochondrial intermembrane side of the membrane. The residue at position 2 (T2) is an N-acetylthreonine; in ADP/ATP translocase 3, N-terminally processed. The Solcar 1 repeat unit spans residues 6–98 (ISFAKDFLAG…FAFKDKYKQI (93 aa)). A helical membrane pass occupies residues 8–37 (FAKDFLAGGIAAAISKTAVAPIERVKLLLQ). Residues 38-74 (VQHASKQIAADKQYKGIVDCIVRIPKEQGVLSFWRGN) lie on the Mitochondrial matrix side of the membrane. K52 carries the post-translational modification N6,N6,N6-trimethyllysine. A helical transmembrane segment spans residues 75–99 (LANVIRYFPTQALNFAFKDKYKQIF). Residues R80 and K92 each coordinate ADP. The Mitochondrial intermembrane portion of the chain corresponds to 100 to 109 (LGGVDKHTQF). K105 carries the post-translational modification N6-acetyllysine. The helical transmembrane segment at 110 to 130 (WRYFAGNLASGGAAGATSLCF) threads the bilayer. 2 Solcar repeats span residues 111–201 (RYFA…AKGM) and 212–297 (VSWM…LKKV). Over 131–178 (VYPLDFARTRLAADVGKSGTEREFRGLGDCLVKITKSDGIRGLYQGFS) the chain is Mitochondrial matrix. A helical transmembrane segment spans residues 179–199 (VSVQGIIIYRAAYFGVYDTAK). The Mitochondrial intermembrane portion of the chain corresponds to 200–210 (GMLPDPKNTHI). The chain crosses the membrane as a helical span at residues 211–231 (VVSWMIAQTVTAVAGVVSYPF). Over 232–273 (DTVRRRMMMQSGRKGADIMYTGTVDCWRKIFRDEGGKAFFKG) the chain is Mitochondrial matrix. Residue R235 coordinates ADP. The important for transport activity stretch occupies residues 235 to 240 (RRRMMM). Positions 235-240 (RRRMMM) match the Nucleotide carrier signature motif motif. N6-acetyllysine is present on K268. A helical transmembrane segment spans residues 274-291 (AWSNVLRGMGGAFVLVLY). The Mitochondrial intermembrane segment spans residues 292–298 (DELKKVI).

The protein belongs to the mitochondrial carrier (TC 2.A.29) family. In terms of assembly, monomer. Found in a complex with ARL2, ARL2BP and SLC25A6/ANT3. (Microbial infection) Interacts with influenza A virus PB1-F2 protein. As to quaternary structure, (Microbial infection) Interacts with HIV-1 Vpr. Trimethylated by ANTKMT at Lys-52. As to expression, expressed in erythrocytes (at protein level).

The protein resides in the mitochondrion inner membrane. Its subcellular location is the membrane. It catalyses the reaction ADP(in) + ATP(out) = ADP(out) + ATP(in). It carries out the reaction H(+)(in) = H(+)(out). The matrix-open state (m-state) is inhibited by the membrane-permeable bongkrekic acid (BKA). The cytoplasmic-open state (c-state) is inhibited by the membrane-impermeable toxic inhibitor carboxyatractyloside (CATR). Proton transporter activity is inhibited by ADP:ATP antiporter activity. In terms of biological role, ADP:ATP antiporter that mediates import of ADP into the mitochondrial matrix for ATP synthesis, and export of ATP out to fuel the cell. Cycles between the cytoplasmic-open state (c-state) and the matrix-open state (m-state): operates by the alternating access mechanism with a single substrate-binding site intermittently exposed to either the cytosolic (c-state) or matrix (m-state) side of the inner mitochondrial membrane. In addition to its ADP:ATP antiporter activity, also involved in mitochondrial uncoupling and mitochondrial permeability transition pore (mPTP) activity. Plays a role in mitochondrial uncoupling by acting as a proton transporter: proton transport uncouples the proton flows via the electron transport chain and ATP synthase to reduce the efficiency of ATP production and cause mitochondrial thermogenesis. Proton transporter activity is inhibited by ADP:ATP antiporter activity, suggesting that SLC25A6/ANT3 acts as a master regulator of mitochondrial energy output by maintaining a delicate balance between ATP production (ADP:ATP antiporter activity) and thermogenesis (proton transporter activity). Proton transporter activity requires free fatty acids as cofactor, but does not transport it. Also plays a key role in mPTP opening, a non-specific pore that enables free passage of the mitochondrial membranes to solutes of up to 1.5 kDa, and which contributes to cell death. It is however unclear if SLC25A6/ANT3 constitutes a pore-forming component of mPTP or regulates it. The protein is ADP/ATP translocase 3 of Homo sapiens (Human).